Consider the following 428-residue polypeptide: Gamma-glutamyl phosphate reductase (428 aa).

It belongs to the gamma-glutamyl phosphate reductase family.

The protein localises to the cytoplasm. The enzyme catalyses L-glutamate 5-semialdehyde + phosphate + NADP(+) = L-glutamyl 5-phosphate + NADPH + H(+). Its pathway is amino-acid biosynthesis; L-proline biosynthesis; L-glutamate 5-semialdehyde from L-glutamate: step 2/2. Catalyzes the NADPH-dependent reduction of L-glutamate 5-phosphate into L-glutamate 5-semialdehyde and phosphate. The product spontaneously undergoes cyclization to form 1-pyrroline-5-carboxylate. The sequence is that of Gamma-glutamyl phosphate reductase from Streptomyces avermitilis (strain ATCC 31267 / DSM 46492 / JCM 5070 / NBRC 14893 / NCIMB 12804 / NRRL 8165 / MA-4680).